The sequence spans 335 residues: Beta-ketoacyl-[acyl-carrier-protein] synthase III (335 aa).

Residues Cys119 and His261 contribute to the active site. The tract at residues 262–266 is ACP-binding; that stretch reads QANQR. Asn291 is a catalytic residue.

Belongs to the thiolase-like superfamily. FabH family. As to quaternary structure, homodimer.

Its subcellular location is the cytoplasm. It carries out the reaction malonyl-[ACP] + acetyl-CoA + H(+) = 3-oxobutanoyl-[ACP] + CO2 + CoA. It functions in the pathway lipid metabolism; fatty acid biosynthesis. In terms of biological role, catalyzes the condensation reaction of fatty acid synthesis by the addition to an acyl acceptor of two carbons from malonyl-ACP. Catalyzes the first condensation reaction which initiates fatty acid synthesis and may therefore play a role in governing the total rate of fatty acid production. Possesses both acetoacetyl-ACP synthase and acetyl transacylase activities. Its substrate specificity determines the biosynthesis of branched-chain and/or straight-chain of fatty acids. The protein is Beta-ketoacyl-[acyl-carrier-protein] synthase III of Prochlorococcus marinus (strain MIT 9515).